Here is a 178-residue protein sequence, read N- to C-terminus: Acireductone dioxygenase 1 (178 aa).

Fe(2+) is bound by residues H84, H86, E90, and H130. Residues H84, H86, E90, and H130 each contribute to the Ni(2+) site.

The protein belongs to the acireductone dioxygenase (ARD) family. The cofactor is Fe(2+). It depends on Ni(2+) as a cofactor.

The protein localises to the cytoplasm. Its subcellular location is the nucleus. The enzyme catalyses 1,2-dihydroxy-5-(methylsulfanyl)pent-1-en-3-one + O2 = 4-methylsulfanyl-2-oxobutanoate + formate + 2 H(+). It carries out the reaction 1,2-dihydroxy-5-(methylsulfanyl)pent-1-en-3-one + O2 = 3-(methylsulfanyl)propanoate + CO + formate + 2 H(+). Its pathway is amino-acid biosynthesis; L-methionine biosynthesis via salvage pathway; L-methionine from S-methyl-5-thio-alpha-D-ribose 1-phosphate: step 5/6. Its function is as follows. Catalyzes 2 different reactions between oxygen and the acireductone 1,2-dihydroxy-3-keto-5-methylthiopentene (DHK-MTPene) depending upon the metal bound in the active site. Fe-containing acireductone dioxygenase (Fe-ARD) produces formate and 2-keto-4-methylthiobutyrate (KMTB), the alpha-ketoacid precursor of methionine in the methionine recycle pathway. Ni-containing acireductone dioxygenase (Ni-ARD) produces methylthiopropionate, carbon monoxide and formate, and does not lie on the methionine recycle pathway. In Coprinopsis cinerea (strain Okayama-7 / 130 / ATCC MYA-4618 / FGSC 9003) (Inky cap fungus), this protein is Acireductone dioxygenase 1.